The sequence spans 2424 residues: Voltage-dependent P/Q-type calcium channel subunit alpha-1A (2424 aa).

Residues 1–98 lie on the Cytoplasmic side of the membrane; it reads MARFGDEMPA…KYAKKITEWP (98 aa). The I repeat unit spans residues 85-363; the sequence is NVVRKYAKKI…LVLGVLSGEF (279 aa). Residues 99 to 117 form a helical membrane-spanning segment; it reads PFEYMILATIIANCIVLAL. At 118 to 135 the chain is on the extracellular side; sequence EQHLPDDDKTPMSERLDD. The chain crosses the membrane as a helical span at residues 136 to 155; sequence TEPYFIGIFCFEAGIKIIAL. Topologically, residues 156 to 167 are cytoplasmic; sequence GFAFHKGSYLRN. Residues 168–185 traverse the membrane as a helical segment; that stretch reads GWNVMDFVVVLTGILATV. Residues 186–190 are Extracellular-facing; the sequence is GTEFD. Residues 191–209 traverse the membrane as a helical segment; the sequence is LRTLRAVRVLRPLKLVSGI. At 210–228 the chain is on the cytoplasmic side; the sequence is PSLQVVLKSIMKAMIPLLQ. Residues 229 to 248 form a helical membrane-spanning segment; sequence IGLLLFFAILIFAIIGLEFY. The Extracellular portion of the chain corresponds to 249-335; it reads MGKFHTTCFE…NSNDASGNTW (87 aa). N-linked (GlcNAc...) asparagine glycosylation is present at Asn-283. Glu-318 lines the Ca(2+) pocket. Residues 336-360 form a helical membrane-spanning segment; the sequence is NWLYFIPLIIIGSFFMLNLVLGVLS. Over 361-487 the chain is Cytoplasmic; sequence GEFAKERERV…FYIRRMVKTQ (127 aa). The binding to the beta subunit stretch occupies residues 383 to 400; sequence QQIERELNGYMEWISKAE. The residue at position 409 (Thr-409) is a Phosphothreonine. Phosphoserine is present on residues Ser-448 and Ser-451. The II repeat unit spans residues 473–717; the sequence is ERRMRFYIRR…VFLAIAVDNL (245 aa). A helical membrane pass occupies residues 488–506; the sequence is AFYWTVLSLVALNTLCVAI. Topologically, residues 507–521 are extracellular; it reads VHYNQPEWLSDFLYY. A helical transmembrane segment spans residues 522-541; it reads AEFIFLGLFMSEMFIKMYGL. Residues 542–549 lie on the Cytoplasmic side of the membrane; the sequence is GTRPYFHS. A helical transmembrane segment spans residues 550 to 568; that stretch reads SFNCFDCGVIIGSIFEVIW. Over 569-578 the chain is Extracellular; it reads AVIKPGTSFG. A helical transmembrane segment spans residues 579-597; the sequence is ISVLRALRLLRIFKVTKYW. At 598–616 the chain is on the cytoplasmic side; the sequence is ASLRNLVVSLLNSMKSIIS. The chain crosses the membrane as a helical span at residues 617–636; the sequence is LLFLLFLFIVVFALLGMQLF. At 637–689 the chain is on the extracellular side; sequence GGQFNFDEGTPPTNFDTFPAAIMTVFQILTGEDWNEVMYDGIKSQGGVQGGMV. Glu-668 is a Ca(2+) binding site. A helical membrane pass occupies residues 690–714; it reads FSIYFIVLTLFGNYTLLNVFLAIAV. Residues 715 to 1253 lie on the Cytoplasmic side of the membrane; sequence DNLANAQELT…RLCHYILNLR (539 aa). 3 positions are modified to phosphoserine: Ser-750, Ser-753, and Ser-790. The tract at residues 819–1229 is disordered; that stretch reads HLDRPLVVDP…GEDGPKPMPP (411 aa). Basic and acidic residues-rich tracts occupy residues 893-912, 922-931, and 969-996; these read ELSR…REGG, EAERGKAGDP, and RPGE…RSGE. Polar residues predominate over residues 1053–1065; sequence PNLSTTRPIQQDL. A phosphoserine mark is found at Ser-1091 and Ser-1104. Low complexity predominate over residues 1110–1140; the sequence is SSTDPAGPTPATAANPQNSTASRRTPNNPGN. Over residues 1151–1168 the composition is skewed to polar residues; sequence ENSLIVTNPSTAQTNSAK. Residues 1204–1214 show a composition bias toward basic and acidic residues; that stretch reads LPKKEDEKKEE. An III repeat occupies 1240 to 1523; that stretch reads NPLRRLCHYI…IFVALIIITF (284 aa). Residues 1254–1272 traverse the membrane as a helical segment; it reads YFEMCILMVIAMSSIALAA. The Extracellular portion of the chain corresponds to 1273–1288; sequence EDPVQPNAPRNNVLRY. The chain crosses the membrane as a helical span at residues 1289-1308; that stretch reads FDYVFTGVFTFEMVIKMIDL. The Cytoplasmic portion of the chain corresponds to 1309 to 1320; the sequence is GLVLHQGAYFRD. A helical membrane pass occupies residues 1321–1339; it reads LWNILDFIVVSGALVAFAF. At 1340–1350 the chain is on the extracellular side; that stretch reads TGNSKGKDINT. Residues 1351 to 1369 traverse the membrane as a helical segment; the sequence is IKSLRVLRVLRPLKTIKRL. At 1370 to 1388 the chain is on the cytoplasmic side; that stretch reads PKLKAVFDCVVNSLKNVFN. Residues 1389-1408 form a helical membrane-spanning segment; the sequence is ILIVYMLFMFIFAVVAVQLF. The Extracellular portion of the chain corresponds to 1409 to 1495; that stretch reads KGKFFHCTDE…QGPSPGYRME (87 aa). Position 1469 (Glu-1469) interacts with Ca(2+). A helical membrane pass occupies residues 1496-1520; it reads MSIFYVVYFVVFPFFFVNIFVALII. Topologically, residues 1521–1575 are cytoplasmic; that stretch reads ITFQEQGDKMMEEYSLEKNERACIDFAISAKPLTRHMPQNKQSFQYRMWQFVVSP. Residues 1560-1823 form an IV repeat; that stretch reads NKQSFQYRMW…LFVAVIMDNF (264 aa). The chain crosses the membrane as a helical span at residues 1576–1604; the sequence is PFEYTIMAMIALNTIVLMMKFYGASVAYD. At 1605-1609 the chain is on the extracellular side; the sequence is NALKV. The helical transmembrane segment at 1610 to 1629 threads the bilayer; sequence FNIVFTSLFSLECLLKVLAF. At 1630–1637 the chain is on the cytoplasmic side; the sequence is GILNYFRD. Residues 1638–1656 traverse the membrane as a helical segment; it reads AWNIFDFVTVLGSITDILV. Residues 1657-1665 are Extracellular-facing; that stretch reads TEFGNNFIN. Asn-1665 is a glycosylation site (N-linked (GlcNAc...) asparagine). Residues 1666–1684 traverse the membrane as a helical segment; it reads LSFLRLFRAARLIKLLRQG. Residues 1685-1703 lie on the Cytoplasmic side of the membrane; that stretch reads YTIRILLWTFVQSFKALPY. A helical membrane pass occupies residues 1704 to 1723; it reads VCLLIAMLFFIYAIIGMQVF. Topologically, residues 1724–1795 are extracellular; the sequence is GNIGIDMEDE…ILTPECGNEF (72 aa). Residues 1796–1820 traverse the membrane as a helical segment; that stretch reads AYFYFVSFIFLCSFLMLNLFVAVIM. Residues 1821–2424 lie on the Cytoplasmic side of the membrane; the sequence is DNFEYLTRDS…GGPRASAPSP (604 aa). A Phosphothreonine modification is found at Thr-1993. Positions 1997-2424 are disordered; sequence FQRMEPPPDE…GGPRASAPSP (428 aa). Positions 2037–2053 are enriched in polar residues; that stretch reads SWVTQRAQEMFQKTGTW. Phosphoserine is present on residues Ser-2054, Ser-2072, Ser-2084, Ser-2086, Ser-2127, and Ser-2148. The segment covering 2074-2090 has biased composition (basic and acidic residues); the sequence is EMREMSQDGYSDSEHCL. Composition is skewed to basic and acidic residues over residues 2142 to 2159 and 2200 to 2210; these read RRLD…ENQR and PSREREQERGR. Residues 2211–2229 show a composition bias toward basic residues; that stretch reads PKDRKHRPHHHHHHHHHPG. Low complexity predominate over residues 2249-2262; the sequence is VARVRPARAPALAH. A compositionally biased stretch (basic residues) spans 2280 to 2305; the sequence is RRARRPRPRQRRRPRRRRGGGGRALR.

The protein belongs to the calcium channel alpha-1 subunit (TC 1.A.1.11) family. CACNA1A subfamily. Voltage-dependent calcium channels are multisubunit complexes, consisting of alpha-1, alpha-2, beta and delta subunits in a 1:1:1:1 ratio. The channel activity is directed by the pore-forming and voltage-sensitive alpha-1 subunit. In many cases, this subunit is sufficient to generate voltage-sensitive calcium channel activity. The auxiliary subunits beta and alpha-2/delta linked by a disulfide bridge regulate the channel activity. Interacts with CABP1. Interacts with the spider omega-agatoxin-IVA (AC P30288). Interacts with TSPOAP1. Brain specific. Purkinje cells contain predominantly P-type VSCC, the Q-type being a prominent calcium current in cerebellar granule cells.

It localises to the cell membrane. The catalysed reaction is Ca(2+)(in) = Ca(2+)(out). In terms of biological role, voltage-sensitive calcium channels (VSCC) mediate the entry of calcium ions into excitable cells and are also involved in a variety of calcium-dependent processes, including muscle contraction, hormone or neurotransmitter release, gene expression, cell motility, cell division and cell death. The isoform alpha-1A gives rise to P and/or Q-type calcium currents. P/Q-type calcium channels belong to the 'high-voltage activated' (HVA) group and are specifically blocked by the spider omega-agatoxin-IVA (AC P54282). They are however insensitive to dihydropyridines (DHP). The sequence is that of Voltage-dependent P/Q-type calcium channel subunit alpha-1A (CACNA1A) from Oryctolagus cuniculus (Rabbit).